The following is a 158-amino-acid chain: Small ribosomal subunit protein uS15 (158 aa).

The segment covering 1 to 10 has biased composition (basic residues); sequence MARMHTRRRG. Positions 1 to 66 are disordered; the sequence is MARMHTRRRG…EGVKGTPIPD (66 aa). Positions 21-32 are enriched in acidic residues; the sequence is DPPEWSDIDADA. Residues 33–45 show a composition bias toward basic and acidic residues; sequence IEERVVELAEQGH.

This sequence belongs to the universal ribosomal protein uS15 family. Part of the 30S ribosomal subunit.

This chain is Small ribosomal subunit protein uS15, found in Haloquadratum walsbyi (strain DSM 16790 / HBSQ001).